Here is a 246-residue protein sequence, read N- to C-terminus: DNA repair protein RecO (246 aa).

Belongs to the RecO family.

In terms of biological role, involved in DNA repair and RecF pathway recombination. This Pelobacter propionicus (strain DSM 2379 / NBRC 103807 / OttBd1) protein is DNA repair protein RecO.